A 280-amino-acid chain; its full sequence is MVRLPLQCLFWGFFLTAVHSEPATACGEKQYPVNSLCCDLCPPGQKLVNDCTEVSKTECQSCGKGEFLSTWNREKYCHEHRYCNPNLGLRIQSEGTLNTDTTCVCVEGQHCTSHTCESCTPHSLCLPGFGVKQIATGLLDTVCEPCPLGFFSNVSSAFEKCHRWTSCERKGLVEQHVGTNKTDVVCGFQSRMRTLVVIPVTMGVLFAVLLVSACIRNITKKRQAKALHPTAERQDPVETIDPEDFPGPHPPPPVQETLCWCQPVAQEDGKESRISVQERE.

Positions 1–20 (MVRLPLQCLFWGFFLTAVHS) are cleaved as a signal peptide. At 21-194 (EPATACGEKQ…VCGFQSRMRT (174 aa)) the chain is on the extracellular side. TNFR-Cys repeat units lie at residues 25–60 (ACGEKQYPVNSLCCDLCPPGQKLVNDCTEVSKTECQ), 61–103 (SCGK…DTTC), 104–144 (VCVE…TVCE), and 145–187 (PCPL…VVCG). Disulfide bonds link Cys26/Cys37, Cys38/Cys51, Cys41/Cys59, Cys62/Cys77, Cys83/Cys103, Cys105/Cys119, Cys111/Cys116, and Cys125/Cys143. N-linked (GlcNAc...) asparagine glycosylation is found at Asn153 and Asn180. Residues 195 to 215 (LVVIPVTMGVLFAVLLVSACI) form a helical membrane-spanning segment. At 216–280 (RNITKKRQAK…ESRISVQERE (65 aa)) the chain is on the cytoplasmic side. Residues 225 to 252 (KALHPTAERQDPVETIDPEDFPGPHPPP) are disordered.

In terms of assembly, monomer and homodimer. Interacts with TRAF1, TRAF2, TRAF3, TRAF5 and TRAF6. Interacts with TRAF6 and MAP3K8; the interaction is required for ERK activation.

It is found in the membrane. In terms of biological role, receptor for TNFSF5/CD40LG. Transduces TRAF6- and MAP3K8-mediated signals that activate ERK in macrophages and B cells, leading to induction of immunoglobulin secretion. This is Tumor necrosis factor receptor superfamily member 5 (CD40) from Bos taurus (Bovine).